Here is a 54-residue protein sequence, read N- to C-terminus: MPSTKPPKERPYGKSKIRCLRCGTREAVIRKYGLYLCRRCFREVAPQLGFKKYY.

Zn(2+)-binding residues include cysteine 19, cysteine 22, cysteine 37, and cysteine 40.

Belongs to the universal ribosomal protein uS14 family. Zinc-binding uS14 subfamily. Part of the 30S ribosomal subunit. Zn(2+) is required as a cofactor.

In terms of biological role, binds 16S rRNA, required for the assembly of 30S particles. The chain is Small ribosomal subunit protein uS14 from Pyrobaculum aerophilum (strain ATCC 51768 / DSM 7523 / JCM 9630 / CIP 104966 / NBRC 100827 / IM2).